A 59-amino-acid polypeptide reads, in one-letter code: Large ribosomal subunit protein bL32 (59 aa).

Residues 1–59 (MAVQQNKKSPSKRGMHRAHDFLTTPPLAVESTTGEAHLRHHISPAGFYRGKKVTKGKGE) form a disordered region. A compositionally biased stretch (basic residues) spans 49–59 (RGKKVTKGKGE).

It belongs to the bacterial ribosomal protein bL32 family.

The chain is Large ribosomal subunit protein bL32 from Dechloromonas aromatica (strain RCB).